The chain runs to 574 residues: Membralin (574 aa).

Residues 1–27 (MSEHAAAPGPGPNGGGGGGAAPVRGPR) are disordered. Position 2 is an N-acetylserine (Ser-2). The chain crosses the membrane as a helical span at residues 69–89 (FFVLLKALFVLFVLAYIHIVF). N-linked (GlcNAc...) asparagine glycosylation is present at Asn-180. 3 helical membrane passes run 293 to 313 (TSYL…SMLL), 337 to 357 (IAFP…MEAI), and 417 to 437 (YSSL…IYFF). 2 stretches are compositionally biased toward low complexity: residues 461-470 (LGPGTPTALP) and 491-501 (LGPSSSPAPTG). Disordered regions lie at residues 461–515 (LGPG…GASV) and 546–574 (RRPT…PAGS).

The protein belongs to the membralin family. As to quaternary structure, interacts with ERLIN2. As to expression, detected in brain, spinal cord, lung, liver and kidney.

It localises to the endoplasmic reticulum membrane. In terms of biological role, may have a role in the ERAD pathway required for clearance of misfolded proteins in the endoplasmic reticulum (ER). Promotes survival of motor neurons, probably by protecting against ER stress. The chain is Membralin (Tmem259) from Mus musculus (Mouse).